The following is a 295-amino-acid chain: 4-diphosphocytidyl-2-C-methyl-D-erythritol kinase (295 aa).

Residue Lys18 is part of the active site. Pro101 to Ser111 lines the ATP pocket. Asp143 is a catalytic residue.

It belongs to the GHMP kinase family. IspE subfamily.

The catalysed reaction is 4-CDP-2-C-methyl-D-erythritol + ATP = 4-CDP-2-C-methyl-D-erythritol 2-phosphate + ADP + H(+). It functions in the pathway isoprenoid biosynthesis; isopentenyl diphosphate biosynthesis via DXP pathway; isopentenyl diphosphate from 1-deoxy-D-xylulose 5-phosphate: step 3/6. Its function is as follows. Catalyzes the phosphorylation of the position 2 hydroxy group of 4-diphosphocytidyl-2C-methyl-D-erythritol. This chain is 4-diphosphocytidyl-2-C-methyl-D-erythritol kinase, found in Vibrio cholerae serotype O1 (strain ATCC 39315 / El Tor Inaba N16961).